Reading from the N-terminus, the 160-residue chain is Putative pre-16S rRNA nuclease (160 aa).

It belongs to the YqgF nuclease family.

Its subcellular location is the cytoplasm. Its function is as follows. Could be a nuclease involved in processing of the 5'-end of pre-16S rRNA. This chain is Putative pre-16S rRNA nuclease, found in Cereibacter sphaeroides (strain ATCC 17025 / ATH 2.4.3) (Rhodobacter sphaeroides).